A 362-amino-acid polypeptide reads, in one-letter code: Porin Omp2b (362 aa).

Residues 1 to 22 form the signal peptide; that stretch reads MNIKSLLLGSAAALVAASGAQA.

The protein belongs to the alphaproteobacteria porin family. As to quaternary structure, homotrimer.

The protein localises to the cell outer membrane. Its function is as follows. Forms passive diffusion pores that allow small molecular weight hydrophilic materials across the outer membrane. In Brucella canis (strain ATCC 23365 / NCTC 10854 / RM-666), this protein is Porin Omp2b (omp2b).